The sequence spans 250 residues: Triosephosphate isomerase (250 aa).

9–11 (NWK) lines the substrate pocket. The active-site Electrophile is H94. The Proton acceptor role is filled by E166. Substrate-binding positions include G172, S212, and 233 to 234 (GG).

Belongs to the triosephosphate isomerase family. As to quaternary structure, homodimer.

It is found in the cytoplasm. It carries out the reaction D-glyceraldehyde 3-phosphate = dihydroxyacetone phosphate. Its pathway is carbohydrate biosynthesis; gluconeogenesis. It participates in carbohydrate degradation; glycolysis; D-glyceraldehyde 3-phosphate from glycerone phosphate: step 1/1. Functionally, involved in the gluconeogenesis. Catalyzes stereospecifically the conversion of dihydroxyacetone phosphate (DHAP) to D-glyceraldehyde-3-phosphate (G3P). In Thermus thermophilus (strain ATCC 27634 / DSM 579 / HB8), this protein is Triosephosphate isomerase.